The primary structure comprises 282 residues: Benzoyl-CoA reductase subunit D (282 aa).

[4Fe-4S] cluster-binding residues include Cys-130 and Cys-169.

As to quaternary structure, heterotetramer composed of A, B, C, and D subunits. It depends on [4Fe-4S] cluster as a cofactor.

The catalysed reaction is cyclohexa-1,5-diene-1-carbonyl-CoA + oxidized 2[4Fe-4S]-[ferredoxin] + 2 ADP + 2 phosphate = reduced 2[4Fe-4S]-[ferredoxin] + benzoyl-CoA + 2 ATP + 2 H2O. It carries out the reaction 3-hydroxybenzoyl-CoA + AH2 + 2 ATP + 2 H2O = 3-hydroxycyclohexa-1,5-diene-1-carbonyl-CoA + A + 2 ADP + 2 phosphate + 2 H(+). Its function is as follows. Catalyzes the anaerobic reduction of benzoyl-CoA and 3-hydroxybenzoyl-CoA to form cyclohexa-1,5-diene-1-carbonyl-CoA and 3-hydroxycyclohexa-1,5-diene-1-carbonyl-CoA, respectively. The enzyme also reduces other benzoyl-CoA analogs with small substituents at the aromatic ring. The polypeptide is Benzoyl-CoA reductase subunit D (bcrD) (Thauera aromatica).